Reading from the N-terminus, the 63-residue chain is DNA-directed RNA polymerase 7 kDa subunit (63 aa).

It belongs to the poxviridae DNA-directed RNA polymerase 7 kDa subunit family. In terms of assembly, the DNA-dependent RNA polymerase used for intermediate and late genes expression consists of eight subunits 147 kDa, 133 kDa, 35 kDa, 30 kDa, 22 kDa, 19 kDa, 18 kDa and 7 kDa totalling more than 500 kDa in mass. The same holoenzyme, with the addition of the transcription-specificity factor RAP94, is used for early gene expression.

The protein localises to the virion. It catalyses the reaction RNA(n) + a ribonucleoside 5'-triphosphate = RNA(n+1) + diphosphate. Functionally, part of the DNA-dependent RNA polymerase which catalyzes the transcription of viral DNA into RNA using the four ribonucleoside triphosphates as substrates. Responsible for the transcription of early, intermediate and late genes. DNA-dependent RNA polymerase associates with the early transcription factor (ETF) thereby allowing the early genes transcription. Late transcription, and probably also intermediate transcription, require newly synthesized RNA polymerase. This is DNA-directed RNA polymerase 7 kDa subunit (RPO7) from Fowlpox virus (strain NVSL) (FPV).